Here is a 1100-residue protein sequence, read N- to C-terminus: Isoleucine--tRNA ligase (1100 aa).

The short motif at 48-58 is the 'HIGH' region element; that stretch reads PFATGLPHFGH. The short motif at 626 to 630 is the 'KMSKS' region element; sequence KMSKS. K629 is an ATP binding site.

Belongs to the class-I aminoacyl-tRNA synthetase family. IleS type 2 subfamily. Monomer. It depends on Zn(2+) as a cofactor.

The protein resides in the cytoplasm. It carries out the reaction tRNA(Ile) + L-isoleucine + ATP = L-isoleucyl-tRNA(Ile) + AMP + diphosphate. In terms of biological role, catalyzes the attachment of isoleucine to tRNA(Ile). As IleRS can inadvertently accommodate and process structurally similar amino acids such as valine, to avoid such errors it has two additional distinct tRNA(Ile)-dependent editing activities. One activity is designated as 'pretransfer' editing and involves the hydrolysis of activated Val-AMP. The other activity is designated 'posttransfer' editing and involves deacylation of mischarged Val-tRNA(Ile). In Treponema denticola (strain ATCC 35405 / DSM 14222 / CIP 103919 / JCM 8153 / KCTC 15104), this protein is Isoleucine--tRNA ligase.